The primary structure comprises 555 residues: Glutamine--tRNA ligase (555 aa).

The 'HIGH' region motif lies at 34 to 44 (PEPNGYLHIGH). ATP-binding positions include 35 to 37 (EPN) and 41 to 47 (HIGHAKS). The L-glutamine site is built by aspartate 67 and tyrosine 212. Residues threonine 231, 261-262 (RL), and 269-271 (MSK) contribute to the ATP site. A 'KMSKS' region motif is present at residues 268 to 272 (VMSKR). The interaction with tRNA stretch occupies residues 317-324 (TKQDNTIE).

The protein belongs to the class-I aminoacyl-tRNA synthetase family. Monomer.

It localises to the cytoplasm. The enzyme catalyses tRNA(Gln) + L-glutamine + ATP = L-glutaminyl-tRNA(Gln) + AMP + diphosphate. The protein is Glutamine--tRNA ligase of Salmonella schwarzengrund (strain CVM19633).